We begin with the raw amino-acid sequence, 328 residues long: Src kinase-associated phosphoprotein 2 (328 aa).

In terms of domain architecture, PH spans 103–206 (EYLRAGYLEK…WVNIIMNSRG (104 aa)). Residues 231-262 (IYEELPEESEKPVTEIETPKATPVPVNNTSGK) form a disordered region. The segment covering 238–248 (ESEKPVTEIET) has biased composition (basic and acidic residues). Residues 266-327 (DYANFYRGLW…PKAYIMEMYD (62 aa)) enclose the SH3 domain.

The protein belongs to the SKAP family. Phosphorylated on tyrosines.

It localises to the cytoplasm. Functionally, may be involved in B-cell and macrophage adhesion processes. May play a role in src signaling pathway. This chain is Src kinase-associated phosphoprotein 2 (skap2), found in Xenopus tropicalis (Western clawed frog).